We begin with the raw amino-acid sequence, 740 residues long: Phosphoribosylformylglycinamidine synthase subunit PurL (740 aa).

Residue His-53 is part of the active site. Residues Tyr-56 and Lys-95 each coordinate ATP. Glu-97 contacts Mg(2+). Residues 98–101 (SHNH) and Arg-120 contribute to the substrate site. His-99 (proton acceptor) is an active-site residue. Position 121 (Asp-121) interacts with Mg(2+). Gln-244 provides a ligand contact to substrate. Asp-274 contacts Mg(2+). Position 318-320 (318-320 (ESQ)) interacts with substrate. ATP contacts are provided by Asp-501 and Gly-538. Asn-539 is a binding site for Mg(2+). Substrate is bound at residue Ser-541.

Belongs to the FGAMS family. In terms of assembly, monomer. Part of the FGAM synthase complex composed of 1 PurL, 1 PurQ and 2 PurS subunits.

The protein localises to the cytoplasm. The enzyme catalyses N(2)-formyl-N(1)-(5-phospho-beta-D-ribosyl)glycinamide + L-glutamine + ATP + H2O = 2-formamido-N(1)-(5-O-phospho-beta-D-ribosyl)acetamidine + L-glutamate + ADP + phosphate + H(+). It functions in the pathway purine metabolism; IMP biosynthesis via de novo pathway; 5-amino-1-(5-phospho-D-ribosyl)imidazole from N(2)-formyl-N(1)-(5-phospho-D-ribosyl)glycinamide: step 1/2. In terms of biological role, part of the phosphoribosylformylglycinamidine synthase complex involved in the purines biosynthetic pathway. Catalyzes the ATP-dependent conversion of formylglycinamide ribonucleotide (FGAR) and glutamine to yield formylglycinamidine ribonucleotide (FGAM) and glutamate. The FGAM synthase complex is composed of three subunits. PurQ produces an ammonia molecule by converting glutamine to glutamate. PurL transfers the ammonia molecule to FGAR to form FGAM in an ATP-dependent manner. PurS interacts with PurQ and PurL and is thought to assist in the transfer of the ammonia molecule from PurQ to PurL. The chain is Phosphoribosylformylglycinamidine synthase subunit PurL from Lactobacillus delbrueckii subsp. bulgaricus (strain ATCC 11842 / DSM 20081 / BCRC 10696 / JCM 1002 / NBRC 13953 / NCIMB 11778 / NCTC 12712 / WDCM 00102 / Lb 14).